The primary structure comprises 100 residues: DNA base-flipping protein (100 aa).

The protein belongs to the MGMT family. ATL subfamily.

In terms of biological role, involved in DNA damage recognition. Binds DNA containing O(6)-methylguanine. Binds to the damaged base and flips the base out of the DNA duplex into an extrahelical conformation, which allows processing by repair proteins. This chain is DNA base-flipping protein, found in Vibrio parahaemolyticus serotype O3:K6 (strain AQ3810).